Consider the following 1250-residue polypeptide: MEQLSDEEIDHGAEEDSDKEDQDLDKMFGAWLGELDKLTQSLDSDKPMEPVKRSPLRQETNMANFSYRFSIYNLNEALNQGETVDLDALMADLCSIEQELSSIGSGNSKRQITETKATQKLPVSRHTLKHGTLKGLSSSSNRIAKPSHASYSLDDVTAQLEQASLSMDEAAQQSVLEDTKPLVTNQHRRTASAGTVSDAEVHSISNSSHSSITSAASSMDSLDIDKVTRPQELDLTHQGQPITEEEQAAKLKAEKIRVALEKIKEAQVKKLVIRVHMSDDSSKTMMVDERQTVRQVLDNLMDKSHCGYSLDWSLVETVSELQMERIFEDHENLVENLLNWTRDSQNKLIFMERIEKYALFKNPQNYLLGKKETAEMADRNKEVLLEECFCGSSVTVPEIEGVLWLKDDGKKSWKKRYFLLRASGIYYVPKGKAKVSRDLVCFLQLDHVNVYYGQDYRNKYKAPTDYCLVLKHPQIQKKSQYIKYLCCDDVRTLHQWVNGIRIAKYGKQLYMNYQEALKRTESAYDWTSLSSSSIKSGSSSSSIPESQSNHSNQSDSGVSDTQPAGHVRSQSIVSSVFSEAWKRGTQLEESSKARMESMNRPYTSLVPPLSPQPKIVTPYTASQPSPPLPPPPPPPPPPPPPPPPPPPPLPSQSAPSAGSAAPMFVKYSTITRLQNASQHSGALFKPPTPPVMQSQSVKPQILVPPNGVVPPPPPPPPPPTPGSAMAQLKPAPCAPSLPQFSAPPPPLKIHQVQHITQVAPPTPPPPPPIPAPLPPQAPPKPLVTIPAPTSTKTVAPVVTQAAPPTPTPPVPPAKKQPAFPASYIPPSPPTPPVPVPPPTLPKQQSFCAKPPPSPLSPVPSVVKQIASQFPPPPTPPAMESQPLKPVPANVAPQSPPAVKAKPKWQPSSIPVPSPDFPPPPPESSLVFPPPPPSPVPAPPPPPPPTASPTPDKSGSPGKKTSKTSSPGGKKPPPTPQRNSSIKSSSGAEHPEPKRPSVDSLVSKFTPPAESGSPSKETLPPPAAPPKPGKLNLSGVNLPGVLQQGCVSAKAPVLSGRGKDSVVEFPSPPSDSDFPPPPPETELPLPPIEIPAVFSGNTSPKVAVVNPQPQQWSKMSVKKAPPPTRPKRNDSTRLTQAEISEQPTMATVVPQVPTSPKSSLSVQPGFLADLNRTLQRKSITRHGSLSSRMSRAEPTATMDDMALPPPPPELLSDQQKAGYGGSHISGYATLRRGPPPAPPKRDQNTKLSRDW.

At M1 the chain carries N-acetylmethionine. Over residues 1–23 the composition is skewed to acidic residues; it reads MEQLSDEEIDHGAEEDSDKEDQD. A disordered region spans residues 1 to 26; the sequence is MEQLSDEEIDHGAEEDSDKEDQDLDK. Phosphoserine occurs at positions 5, 17, 54, 150, 192, 203, and 205. Positions 179–217 are disordered; it reads TKPLVTNQHRRTASAGTVSDAEVHSISNSSHSSITSAAS. Over residues 202 to 217 the composition is skewed to low complexity; that stretch reads HSISNSSHSSITSAAS. The region spanning 269 to 355 is the Ras-associating domain; sequence KKLVIRVHMS…NKLIFMERIE (87 aa). The region spanning 396 to 505 is the PH domain; the sequence is VPEIEGVLWL…WVNGIRIAKY (110 aa). A phosphotyrosine; by ABL1 mark is found at Y426 and Y456. Residues 535 to 551 show a composition bias toward low complexity; that stretch reads KSGSSSSSIPESQSNHS. Disordered stretches follow at residues 535–570, 588–663, 675–1036, 1050–1162, and 1176–1250; these read KSGSSSSSIPESQSNHSNQSDSGVSDTQPAGHVRSQ, EESS…AAPM, NASQ…SGVN, APVL…LSVQ, and KSIT…SRDW. Over residues 552-570 the composition is skewed to polar residues; that stretch reads NQSDSGVSDTQPAGHVRSQ. Positions 588–597 are enriched in basic and acidic residues; the sequence is EESSKARMES. S610 is subject to Phosphoserine. A compositionally biased stretch (pro residues) spans 624-650; the sequence is PSPPLPPPPPPPPPPPPPPPPPPPPLP. Low complexity predominate over residues 651–662; that stretch reads SQSAPSAGSAAP. Pro residues-rich tracts occupy residues 707 to 721 and 760 to 781; these read GVVPPPPPPPPPPTP and PPTPPPPPPIPAPLPPQAPPKP. Over residues 791–802 the composition is skewed to low complexity; sequence TKTVAPVVTQAA. Pro residues-rich tracts occupy residues 803–814 and 823–840; these read PPTPTPPVPPAK and YIPPSPPTPPVPVPPPTL. S827 is subject to Phosphoserine. Residue T830 is modified to Phosphothreonine. Phosphoserine is present on residues S845, S853, and S894. Residues 909-947 are compositionally biased toward pro residues; that stretch reads IPVPSPDFPPPPPESSLVFPPPPPSPVPAPPPPPPPTAS. Positions 948-968 are enriched in low complexity; that stretch reads PTPDKSGSPGKKTSKTSSPGG. S965 is subject to Phosphoserine. T974 carries the phosphothreonine modification. Residues 976–986 are compositionally biased toward polar residues; sequence QRNSSIKSSSG. S996 and S1012 each carry phosphoserine. Pro residues-rich tracts occupy residues 1018–1027 and 1065–1088; these read LPPPAAPPKP and PSPPSDSDFPPPPPETELPLPPIE. 2 stretches are compositionally biased toward polar residues: residues 1131–1144 and 1151–1161; these read TRLTQAEISEQPTM and VPTSPKSSLSV. Residue S1183 is modified to Phosphoserine. At Y1226 the chain carries Phosphotyrosine; by ABL1. Residues 1238–1250 are compositionally biased toward basic and acidic residues; it reads PKRDQNTKLSRDW.

This sequence belongs to the MRL family. Interacts with EVL and VASP and targets them to the leading edge. Interacts (via Ras associating and PH domains) with RAC1. In terms of tissue distribution, isoform RMO1-RAPH1 is ubiquitously expressed with highest levels in brain, heart, ovary and developing embryo. Isoform RMO1 is widely expressed with highest levels in liver. Low expression in B-cells.

Its subcellular location is the cell membrane. The protein resides in the cell projection. It localises to the lamellipodium. It is found in the filopodium. The protein localises to the cytoplasm. Its subcellular location is the cytoskeleton. Its function is as follows. Mediator of localized membrane signals. Implicated in the regulation of lamellipodial dynamics. Negatively regulates cell adhesion. The protein is Ras-associated and pleckstrin homology domains-containing protein 1 (RAPH1) of Homo sapiens (Human).